Here is a 252-residue protein sequence, read N- to C-terminus: uncharacterized protein (252 aa).

6 consecutive transmembrane segments (helical) span residues 5-25, 29-49, 61-81, 141-161, 179-199, and 217-237; these read LTSL…IVSF, LALV…GTFI, IAGI…GLYF, ILPS…PGII, WLLL…SKWW, and IGWI…LIQF.

The protein belongs to the DedA family.

Its subcellular location is the cell membrane. This is an uncharacterized protein from Buchnera aphidicola subsp. Schizaphis graminum (strain Sg).